The following is a 547-amino-acid chain: CTP synthase (547 aa).

An amidoligase domain region spans residues 1 to 269 (MKTKFIFVTG…DQKVAIMLRL (269 aa)). Ser14 is a binding site for CTP. UTP is bound at residue Ser14. Residues 15 to 20 (SLGKGL) and Asp72 contribute to the ATP site. Mg(2+)-binding residues include Asp72 and Glu143. Residues 150–152 (DIE), 190–195 (KTKPTQ), and Lys226 contribute to the CTP site. Residues 190-195 (KTKPTQ) and Lys226 each bind UTP. Residues 294–547 (TVAIVGKYVD…IGAAKKHAKV (254 aa)) enclose the Glutamine amidotransferase type-1 domain. Gly356 is a binding site for L-glutamine. Catalysis depends on Cys383, which acts as the Nucleophile; for glutamine hydrolysis. L-glutamine contacts are provided by residues 384–387 (LGMQ), Glu407, and Arg475. Catalysis depends on residues His520 and Glu522.

This sequence belongs to the CTP synthase family. In terms of assembly, homotetramer.

It catalyses the reaction UTP + L-glutamine + ATP + H2O = CTP + L-glutamate + ADP + phosphate + 2 H(+). It carries out the reaction L-glutamine + H2O = L-glutamate + NH4(+). The enzyme catalyses UTP + NH4(+) + ATP = CTP + ADP + phosphate + 2 H(+). Its pathway is pyrimidine metabolism; CTP biosynthesis via de novo pathway; CTP from UDP: step 2/2. With respect to regulation, allosterically activated by GTP, when glutamine is the substrate; GTP has no effect on the reaction when ammonia is the substrate. The allosteric effector GTP functions by stabilizing the protein conformation that binds the tetrahedral intermediate(s) formed during glutamine hydrolysis. Inhibited by the product CTP, via allosteric rather than competitive inhibition. Catalyzes the ATP-dependent amination of UTP to CTP with either L-glutamine or ammonia as the source of nitrogen. Regulates intracellular CTP levels through interactions with the four ribonucleotide triphosphates. This Desulfovibrio desulfuricans (strain ATCC 27774 / DSM 6949 / MB) protein is CTP synthase.